We begin with the raw amino-acid sequence, 203 residues long: Somatotropin (203 aa).

A signal peptide spans 1–17; sequence MNRVILLLSVMCVGVSS. At Gln18 the chain carries Pyrrolidone carboxylic acid. Intrachain disulfides connect Cys68–Cys176 and Cys193–Cys201.

The protein belongs to the somatotropin/prolactin family.

The protein localises to the secreted. Functionally, growth hormone plays an important role in growth control and is involved in the regulation of several anabolic processes. Implicated as an osmoregulatory substance important for seawater adaptation. This Verasper variegatus (Spotted flounder) protein is Somatotropin (gh).